The primary structure comprises 476 residues: Aspartyl/glutamyl-tRNA(Asn/Gln) amidotransferase subunit B (476 aa).

The protein belongs to the GatB/GatE family. GatB subfamily. Heterotrimer of A, B and C subunits.

The enzyme catalyses L-glutamyl-tRNA(Gln) + L-glutamine + ATP + H2O = L-glutaminyl-tRNA(Gln) + L-glutamate + ADP + phosphate + H(+). It carries out the reaction L-aspartyl-tRNA(Asn) + L-glutamine + ATP + H2O = L-asparaginyl-tRNA(Asn) + L-glutamate + ADP + phosphate + 2 H(+). Allows the formation of correctly charged Asn-tRNA(Asn) or Gln-tRNA(Gln) through the transamidation of misacylated Asp-tRNA(Asn) or Glu-tRNA(Gln) in organisms which lack either or both of asparaginyl-tRNA or glutaminyl-tRNA synthetases. The reaction takes place in the presence of glutamine and ATP through an activated phospho-Asp-tRNA(Asn) or phospho-Glu-tRNA(Gln). In Geobacillus kaustophilus (strain HTA426), this protein is Aspartyl/glutamyl-tRNA(Asn/Gln) amidotransferase subunit B.